Here is a 772-residue protein sequence, read N- to C-terminus: Uracil catabolism protein 2 (772 aa).

Residues 1 to 70 (MDINSNASVS…KKPRKKRKTF (70 aa)) are disordered. Over residues 39–51 (HPEDSARAKERSE) the composition is skewed to basic and acidic residues. Residues 59–69 (GNKKPRKKRKT) show a composition bias toward basic residues. A DNA-binding region (zn(2)-C6 fungal-type) is located at residues 72–101 (CDTCRRVKTRCDFEPFIGKCYRCNVLQLDC).

Belongs to the URC2 family.

The protein resides in the cytoplasm. It is found in the nucleus. Its function is as follows. Probable transcriptional activator involved in uracil catabolism. The chain is Uracil catabolism protein 2 (URC2) from Saccharomyces cerevisiae (strain ATCC 204508 / S288c) (Baker's yeast).